A 215-amino-acid polypeptide reads, in one-letter code: Probable transaldolase (215 aa).

Catalysis depends on Lys-83, which acts as the Schiff-base intermediate with substrate.

It belongs to the transaldolase family. Type 3B subfamily.

The protein localises to the cytoplasm. The catalysed reaction is D-sedoheptulose 7-phosphate + D-glyceraldehyde 3-phosphate = D-erythrose 4-phosphate + beta-D-fructose 6-phosphate. It participates in carbohydrate degradation; pentose phosphate pathway; D-glyceraldehyde 3-phosphate and beta-D-fructose 6-phosphate from D-ribose 5-phosphate and D-xylulose 5-phosphate (non-oxidative stage): step 2/3. Its function is as follows. Transaldolase is important for the balance of metabolites in the pentose-phosphate pathway. This chain is Probable transaldolase, found in Methanococcus maripaludis (strain C7 / ATCC BAA-1331).